The chain runs to 353 residues: Palmitoyltransferase SWF1 (353 aa).

A topological domain (lumenal) is located at residue methionine 1. The helical transmembrane segment at 2–22 threads the bilayer; the sequence is LFTLIVCLTIISSLATFLLLF. The Cytoplasmic portion of the chain corresponds to 23-61; sequence GDSPSFRNTPIQKLRNSLLSISRDIFQFYHWLDEKLNGQ. Residues 62 to 82 traverse the membrane as a helical segment; that stretch reads LLKILNWLVPVGYVMVVTVCF. Residues 83–100 are Lumenal-facing; sequence QQFLTHTLPMLSSPGLFR. Residues 101–121 form a helical membrane-spanning segment; that stretch reads LFTIYFSMVLIYASTILAAFS. Over 122–190 the chain is Cytoplasmic; that stretch reads DPGRITTINL…NNCVGYYNYK (69 aa). A DHHC domain is found at 147 to 197; that stretch reads KTCSTCHIAKPARSKHCSVCNQCFLLYDHHCVWINNCVGYYNYKWFMLFLI. Cysteine 177 acts as the S-palmitoyl cysteine intermediate in catalysis. A helical membrane pass occupies residues 191 to 211; that stretch reads WFMLFLISNINMLGYGGWLCY. Topologically, residues 212 to 233 are lumenal; the sequence is WALTPVSWRKITSTNNANKVTG. The helical transmembrane segment at 234 to 254 threads the bilayer; the sequence is IFLILCSIFIVITTLFTFLHL. The Cytoplasmic portion of the chain corresponds to 255 to 353; the sequence is RYIYLGVTTN…WNNLIERLKW (99 aa).

It belongs to the DHHC palmitoyltransferase family. SWF1 subfamily.

It localises to the endoplasmic reticulum membrane. It carries out the reaction L-cysteinyl-[protein] + hexadecanoyl-CoA = S-hexadecanoyl-L-cysteinyl-[protein] + CoA. In terms of biological role, palmitoyltransferase that targets several endosomal SNAREs. Palmitoylates the SNAREs at cysteine residues close to the cytoplasmic end of their transmembrane domain. May have a role in the cellular quality control of transmembrane domain-containing proteins. The protein is Palmitoyltransferase SWF1 (SWF1) of Candida albicans (strain SC5314 / ATCC MYA-2876) (Yeast).